Reading from the N-terminus, the 513-residue chain is ATP synthase subunit alpha (513 aa).

ATP is bound at residue 169–176 (GDRQTGKT).

It belongs to the ATPase alpha/beta chains family. In terms of assembly, F-type ATPases have 2 components, CF(1) - the catalytic core - and CF(0) - the membrane proton channel. CF(1) has five subunits: alpha(3), beta(3), gamma(1), delta(1), epsilon(1). CF(0) has three main subunits: a(1), b(2) and c(9-12). The alpha and beta chains form an alternating ring which encloses part of the gamma chain. CF(1) is attached to CF(0) by a central stalk formed by the gamma and epsilon chains, while a peripheral stalk is formed by the delta and b chains.

The protein resides in the cell inner membrane. It carries out the reaction ATP + H2O + 4 H(+)(in) = ADP + phosphate + 5 H(+)(out). Its function is as follows. Produces ATP from ADP in the presence of a proton gradient across the membrane. The alpha chain is a regulatory subunit. This is ATP synthase subunit alpha from Mannheimia succiniciproducens (strain KCTC 0769BP / MBEL55E).